Here is a 744-residue protein sequence, read N- to C-terminus: Serine/threonine-protein kinase GM11705 (744 aa).

Residues 17 to 35 (VLSSHQPSPSATHPQSVPS) show a composition bias toward polar residues. Disordered stretches follow at residues 17 to 38 (VLSSHQPSPSATHPQSVPSKAN) and 54 to 78 (NVQEDNSYNRDCDSPVSSSSEPEKE). Doublecortin domains lie at 154–240 (LRIK…VEYN) and 309–392 (RIVT…AEDF). Positions 473 to 731 (YTLGRIIGDG…SEDILDHPWT (259 aa)) constitute a Protein kinase domain. ATP contacts are provided by residues 479-487 (IGDGNFAIV) and Lys-502. Residue Asp-594 is the Proton acceptor of the active site.

Belongs to the protein kinase superfamily. CAMK Ser/Thr protein kinase family. CaMK subfamily.

The catalysed reaction is L-seryl-[protein] + ATP = O-phospho-L-seryl-[protein] + ADP + H(+). The enzyme catalyses L-threonyl-[protein] + ATP = O-phospho-L-threonyl-[protein] + ADP + H(+). The chain is Serine/threonine-protein kinase GM11705 from Drosophila sechellia (Fruit fly).